The sequence spans 365 residues: Zinc finger MYND domain-containing protein 12 (365 aa).

C17, C20, C28, C31, C37, H41, H50, and C54 together coordinate Zn(2+). The MYND-type; atypical zinc finger occupies 17–54 (CEVCEAPAERVCAACTVTYYCGVVHQKADWDSIHEKIC). TPR repeat units lie at residues 172–205 (SLLH…ASCA) and 214–247 (SGGY…WHAY).

Expressed predominantly in the testis.

It localises to the cell projection. The protein resides in the cilium. The protein localises to the flagellum. Required for sperm flagellum function and male fertility. This Homo sapiens (Human) protein is Zinc finger MYND domain-containing protein 12 (ZMYND12).